The primary structure comprises 24 residues: MSMGIAARPPRAALLPPPSVPRSR.

Residues 1 to 14 (MSMGIAARPPRAAL) are compositionally biased toward low complexity. The interval 1–24 (MSMGIAARPPRAALLPPPSVPRSR) is disordered. The segment covering 15 to 24 (LPPPSVPRSR) has biased composition (pro residues).

This peptide is involved in the control mechanism of the synthesis of the macrolide-lincosamide-streptogramin B resistance protein. This is Erythromycin resistance leader peptide from Streptomyces fradiae (Streptomyces roseoflavus).